We begin with the raw amino-acid sequence, 290 residues long: NH(3)-dependent NAD(+) synthetase (290 aa).

33–40 provides a ligand contact to ATP; sequence GVSGGVDS. Residue Asp-39 participates in Mg(2+) binding. Arg-154 contributes to the deamido-NAD(+) binding site. Thr-174 is an ATP binding site. Glu-179 provides a ligand contact to Mg(2+). The deamido-NAD(+) site is built by Lys-187 and Asp-194. Positions 203 and 225 each coordinate ATP.

This sequence belongs to the NAD synthetase family. As to quaternary structure, homodimer.

The enzyme catalyses deamido-NAD(+) + NH4(+) + ATP = AMP + diphosphate + NAD(+) + H(+). It functions in the pathway cofactor biosynthesis; NAD(+) biosynthesis; NAD(+) from deamido-NAD(+) (ammonia route): step 1/1. Functionally, catalyzes the ATP-dependent amidation of deamido-NAD to form NAD. Uses ammonia as a nitrogen source. The sequence is that of NH(3)-dependent NAD(+) synthetase from Thermotoga neapolitana (strain ATCC 49049 / DSM 4359 / NBRC 107923 / NS-E).